Reading from the N-terminus, the 561-residue chain is Proline--tRNA ligase (561 aa).

The protein belongs to the class-II aminoacyl-tRNA synthetase family. ProS type 1 subfamily. Homodimer.

It is found in the cytoplasm. The enzyme catalyses tRNA(Pro) + L-proline + ATP = L-prolyl-tRNA(Pro) + AMP + diphosphate. In terms of biological role, catalyzes the attachment of proline to tRNA(Pro) in a two-step reaction: proline is first activated by ATP to form Pro-AMP and then transferred to the acceptor end of tRNA(Pro). As ProRS can inadvertently accommodate and process non-cognate amino acids such as alanine and cysteine, to avoid such errors it has two additional distinct editing activities against alanine. One activity is designated as 'pretransfer' editing and involves the tRNA(Pro)-independent hydrolysis of activated Ala-AMP. The other activity is designated 'posttransfer' editing and involves deacylation of mischarged Ala-tRNA(Pro). The misacylated Cys-tRNA(Pro) is not edited by ProRS. The protein is Proline--tRNA ligase of Thermosipho africanus (strain TCF52B).